Here is a 367-residue protein sequence, read N- to C-terminus: Centromere protein L (367 aa).

The protein belongs to the CENP-L/IML3 family.

Its subcellular location is the nucleus. The protein resides in the chromosome. It is found in the centromere. Probable component of a centromeric complex involved in assembly of kinetochore proteins, mitotic progression and chromosome segregation. This is Centromere protein L (cenpl) from Danio rerio (Zebrafish).